Consider the following 109-residue polypeptide: Matrix protein 2 (109 aa).

Residues 1–4 (MLEP) are Virion surface-facing. The chain crosses the membrane as a helical; Signal-anchor for type III membrane protein span at residues 5 to 27 (FQILSICSFILSALHFMAWTIGH). At 28-109 (LNQIKRGVNM…ETVLEIEELH (82 aa)) the chain is on the intravirion side. The stretch at 58–83 (HSYQKEIQAKETMKEVLSDNMEVLSD) forms a coiled coil.

In terms of assembly, homotetramer. Post-translationally, phosphorylated by host.

It is found in the virion membrane. It localises to the host cell membrane. In terms of biological role, forms presumably a highly low-pH gated proton-selective channel. Trp-23 may function as a minimalistic gate that opens and closes the pore. When the environmental pH is lower than a threshold, the BM2 channel would be activated and selectively transport protons across the membrane from the extracellular side to the cytoplasmic side. Crucial for the uncoating process. When the virion is internalized into the endosome, the channel acidifies the virion's interior, promoting the dissociation of matrix protein 1 (M1) from the ribonucleoprotein (RNP) thus allowing the transport of the RNP from the virion into the cell's nucleus. Also plays a role in viral proteins secretory pathway. Elevates the intravesicular pH of normally acidic compartments, such as trans-Golgi network, preventing newly formed hemagglutinin from premature switching to the fusion-active conformation. Plays a crucial role in virion assembly. Expressed in the late phase of the infection. The polypeptide is Matrix protein 2 (M) (Influenza B virus (strain B/Memphis/12/1997)).